The chain runs to 512 residues: Rab11 family-interacting protein 2 (512 aa).

The C2 domain occupies 1–120 (MMLSEQAQKW…DKQRRKTEWF (120 aa)). The tract at residues 15-102 (VQVTVLQAKD…GLDKFLGQVA (88 aa)) is necessary for its cellular translocation to the plasma membrane. 2 disordered regions span residues 174–231 (RKSD…MSDL) and 263–287 (PESG…NQPG). Polar residues-rich tracts occupy residues 221 to 231 (RLSSAHSMSDL) and 277 to 287 (SFDTSKLNQPG). Position 227 is a phosphoserine; by MARK2 (Ser-227). Ser-277 carries the phosphoserine modification. An NPF 1 motif is present at residues 323–325 (NPF). The segment covering 347-374 (KESKREKREKVSLFERVTGKRDSRRPDK) has biased composition (basic and acidic residues). A disordered region spans residues 347-390 (KESKREKREKVSLFERVTGKRDSRRPDKLNNGGSDSPCDLKSPS). 2 consecutive short sequence motifs (NPF) follow at residues 406-408 (NPF) and 440-442 (NPF). In terms of domain architecture, FIP-RBD spans 437–499 (PDNNPFDATA…EETPSILRVP (63 aa)). The tract at residues 465-512 (ELLRRKDTHIRELEDYIDNLLVRVMEETPSILRVPYEPSRKAGKFTNS) is necessary for interaction with AP2A1, RAB11A, subcellular location, endocytosis activity and homooligomerization.

In terms of assembly, homooligomerizes in a Rab11-independent manner. Forms a heterooligomeric complex with RAB11FIP4. Interacts with AP2A1, MYO5B, RAB25 and REPS1. Interacts with RAB11A and RAB11B (activated GTP-bound form). Interacts with NPC1L1. Interacts (via NPF motifs) with EHD1 and EHD3. Interacts with TICAM2; this interaction directs RAB11FIP2 to the phagosome. Interacts with RAB14 and RAB25 (GTP-bound forms). In terms of processing, phosphorylation at Ser-227 by MARK2 regulates epithelial cell polarity.

It localises to the cell membrane. The protein resides in the recycling endosome membrane. A Rab11 effector binding preferentially phosphatidylinositol 3,4,5-trisphosphate (PtdInsP3) and phosphatidic acid (PA) and acting in the regulation of the transport of vesicles from the endosomal recycling compartment (ERC) to the plasma membrane. Involved in insulin granule exocytosis. Also involved in receptor-mediated endocytosis and membrane trafficking of recycling endosomes, probably originating from clathrin-coated vesicles. Required in a complex with MYO5B and RAB11 for the transport of NPC1L1 to the plasma membrane. Also acts as a regulator of cell polarity. Plays an essential role in phagocytosis through a mechanism involving TICAM2, RAC1 and CDC42 Rho GTPases for controlling actin-dynamics. This Mus musculus (Mouse) protein is Rab11 family-interacting protein 2 (Rab11fip2).